Reading from the N-terminus, the 140-residue chain is FlaA locus uncharacterized protein YlxG (140 aa).

A disordered region spans residues M1 to N21.

This sequence belongs to the FlgD family.

This chain is FlaA locus uncharacterized protein YlxG (ylxG), found in Bacillus subtilis (strain 168).